The sequence spans 132 residues: Agouti-signaling protein (132 aa).

An N-terminal signal peptide occupies residues 1-22 (MDVTRLLLATLLVFLCFFTANS). The N-linked (GlcNAc...) asparagine glycan is linked to Asn-39. Residues 61-87 (QIGRKEAEKKRSSKKEASMKKVARPRT) form a disordered region. A compositionally biased stretch (basic and acidic residues) spans 63–79 (GRKEAEKKRSSKKEASM). 5 cysteine pairs are disulfide-bonded: Cys-93-Cys-108, Cys-100-Cys-114, Cys-107-Cys-125, Cys-111-Cys-132, and Cys-116-Cys-123. The 40-residue stretch at 93–132 (CVATRNSCKPPAPACCDPCASCQCRFFRSACSCRVLSLNC) folds into the Agouti domain.

It localises to the secreted. Involved in the regulation of melanogenesis. The binding of ASP to MC1R precludes alpha-MSH initiated signaling and thus blocks production of cAMP, leading to a down-regulation of eumelanogenesis (brown/black pigment) and thus increasing synthesis of pheomelanin (yellow/red pigment). This is Agouti-signaling protein (ASIP) from Gorilla gorilla gorilla (Western lowland gorilla).